Consider the following 306-residue polypeptide: Tryptophan 2,3-dioxygenase (306 aa).

The interval 1-29 (MQPPGDDAAPRCPFAGAHAPDAPHVPEAA) is disordered. Residues 75–79 (FIIQH), Y137, and R141 each bind substrate. Heme is bound at residue H264. Residue T278 coordinates substrate.

Belongs to the tryptophan 2,3-dioxygenase family. In terms of assembly, homotetramer. It depends on heme as a cofactor.

The enzyme catalyses L-tryptophan + O2 = N-formyl-L-kynurenine. Its pathway is amino-acid degradation; L-tryptophan degradation via kynurenine pathway; L-kynurenine from L-tryptophan: step 1/2. Its function is as follows. Heme-dependent dioxygenase that catalyzes the oxidative cleavage of the L-tryptophan (L-Trp) pyrrole ring and converts L-tryptophan to N-formyl-L-kynurenine. Catalyzes the oxidative cleavage of the indole moiety. This is Tryptophan 2,3-dioxygenase from Burkholderia mallei (strain NCTC 10247).